Here is a 514-residue protein sequence, read N- to C-terminus: 2,3-bisphosphoglycerate-independent phosphoglycerate mutase (514 aa).

2 residues coordinate Mn(2+): Asp14 and Ser64. Residue Ser64 is the Phosphoserine intermediate of the active site. Substrate is bound by residues His125, 155-156 (RD), Arg187, Arg193, 263-266 (RADR), and Lys336. Residues Asp403, His407, Asp444, His445, and His463 each coordinate Mn(2+).

Belongs to the BPG-independent phosphoglycerate mutase family. In terms of assembly, monomer. Mn(2+) is required as a cofactor.

The enzyme catalyses (2R)-2-phosphoglycerate = (2R)-3-phosphoglycerate. It participates in carbohydrate degradation; glycolysis; pyruvate from D-glyceraldehyde 3-phosphate: step 3/5. Catalyzes the interconversion of 2-phosphoglycerate and 3-phosphoglycerate. This chain is 2,3-bisphosphoglycerate-independent phosphoglycerate mutase, found in Shewanella putrefaciens (strain CN-32 / ATCC BAA-453).